The sequence spans 505 residues: Protein disulfide-isomerase A3 (505 aa).

The signal sequence occupies residues 1 to 24 (MRLRRLALFPGVALLLAAARLAAA). The 109-residue stretch at 25–133 (SDVLELTDDN…IVSHLKKQAG (109 aa)) folds into the Thioredoxin 1 domain. Active-site nucleophile residues include Cys-57 and Cys-60. Cys-57 and Cys-60 are oxidised to a cystine. At Lys-61 the chain carries N6-methyllysine. A disulfide bridge links Cys-85 with Cys-92. Lys-129 carries the N6-succinyllysine modification. Lys-152 bears the N6-acetyllysine mark. Lys-218 carries the post-translational modification N6-succinyllysine. Position 252 is an N6-acetyllysine (Lys-252). Thr-319 carries the post-translational modification Phosphothreonine. The region spanning 343 to 485 (SRDGKALERF…FISYLQREAT (143 aa)) is the Thioredoxin 2 domain. Lys-362 carries the N6-acetyllysine modification. Residues Cys-406 and Cys-409 each act as nucleophile in the active site. Cysteines 406 and 409 form a disulfide. Residues 484 to 505 (ATNPPVIQEEKPKKKKKAQEDL) are disordered. Basic and acidic residues predominate over residues 491-505 (QEEKPKKKKKAQEDL). Lys-494 carries the post-translational modification N6-acetyllysine. The short motif at 502 to 505 (QEDL) is the Prevents secretion from ER element.

In terms of assembly, part of the major histocompatibility complex class I (MHC I) peptide loading complex composed of TAP1, TAP2, B2M, MHC heavy chain, TAPBP, PDIA3, and CALR. Interacts with ERP27 and CANX. Interacts with SERPINA2 and with the S and Z variants of SERPINA1. Interacts with ATP2A2. Within the major histocompatibility complex class I (MHC I) peptide loading complex forms reversible disulfide-linked heterodimers with TAPBP as part of its protein folding chaperone activity. This is essential to assist the dynamic assembly of the MHC I complex with high affinity antigens in the endoplasmic reticulum. Post-translationally, phosphorylated. As to expression, detected in the flagellum and head region of spermatozoa (at protein level). Expressed in liver, stomach and colon (at protein level). Expressed in gastric parietal cells and chief cells (at protein level).

The protein resides in the endoplasmic reticulum. Its subcellular location is the endoplasmic reticulum lumen. It is found in the melanosome. The enzyme catalyses Catalyzes the rearrangement of -S-S- bonds in proteins.. Its activity is regulated as follows. Association with calcitriol does not affect its enzymatic activity. Functionally, protein disulfide isomerase that catalyzes the formation, isomerization, and reduction or oxidation of disulfide bonds in client proteins and functions as a protein folding chaperone. Core component of the major histocompatibility complex class I (MHC I) peptide loading complex where it functions as an essential folding chaperone for TAPBP. Through TAPBP, assists the dynamic assembly of the MHC I complex with high affinity antigens in the endoplasmic reticulum. Therefore, plays a crucial role in the presentation of antigens to cytotoxic T cells in adaptive immunity. The protein is Protein disulfide-isomerase A3 of Homo sapiens (Human).